A 660-amino-acid polypeptide reads, in one-letter code: Threonine--tRNA ligase (660 aa).

The region spanning 1-49 (MPINEIRVQKGQRYRDAINDKKVIAVKKGDKFLDLDEIAGEDEAVQPVY) is the TGS domain. The interval 225–554 (DHRKIIAEMD…LLEHFAGKLP (330 aa)) is catalytic. Zn(2+)-binding residues include Cys-318, His-369, and His-531.

It belongs to the class-II aminoacyl-tRNA synthetase family. In terms of assembly, homodimer. It depends on Zn(2+) as a cofactor.

Its subcellular location is the cytoplasm. The enzyme catalyses tRNA(Thr) + L-threonine + ATP = L-threonyl-tRNA(Thr) + AMP + diphosphate + H(+). Functionally, catalyzes the attachment of threonine to tRNA(Thr) in a two-step reaction: L-threonine is first activated by ATP to form Thr-AMP and then transferred to the acceptor end of tRNA(Thr). The sequence is that of Threonine--tRNA ligase from Thermoplasma volcanium (strain ATCC 51530 / DSM 4299 / JCM 9571 / NBRC 15438 / GSS1).